We begin with the raw amino-acid sequence, 492 residues long: 5-taurinomethyluridine-[tRNA] synthase subunit GTPB3, mitochondrial (492 aa).

A mitochondrion-targeting transit peptide spans 1–20 (MWRGLSALVTQAAWAPLRLC). 5,10-methylenetetrahydrofolate-binding residues include Arg52, Glu112, and Lys152. Positions 249-416 (GANVVVTGPP…LLQALKTELA (168 aa)) constitute a TrmE-type G domain. Residues 256-263 (GPPNAGKS), 282-286 (GTTRD), 303-306 (DTAG), and 374-377 (NKSD) each bind GTP. Asn259 lines the K(+) pocket. Ser263 and Thr284 together coordinate Mg(2+). A 5,10-methylenetetrahydrofolate-binding site is contributed by Lys492.

It belongs to the TRAFAC class TrmE-Era-EngA-EngB-Septin-like GTPase superfamily. TrmE GTPase family. As to quaternary structure, homodimer; forms a dimer in the presence of potassium. Interacts with MTO1; forms the GTPBP3-MTO1 complex composed of homodimers of GTPBP3 and MTO1. K(+) is required as a cofactor. As to expression, ubiquitously expressed. Highly expressed in tissues with high metabolic rates including heart, liver and brain. Weakly expressed in skeletal muscle.

It localises to the mitochondrion. It carries out the reaction GTP + H2O = GDP + phosphate + H(+). Functionally, GTPase component of the GTPBP3-MTO1 complex that catalyzes the 5-taurinomethyluridine (taum(5)U) modification at the 34th wobble position (U34) of mitochondrial tRNAs (mt-tRNAs), which plays a role in mt-tRNA decoding and mitochondrial translation. Taum(5)U formation on mammalian mt-tRNA requires the presence of both GTPBP3-mediated GTPase activity and MTO1 catalytic activity. The sequence is that of 5-taurinomethyluridine-[tRNA] synthase subunit GTPB3, mitochondrial from Mus musculus (Mouse).